The sequence spans 151 residues: Aspartate carbamoyltransferase regulatory chain (151 aa).

Zn(2+)-binding residues include C107, C112, C135, and C138.

The protein belongs to the PyrI family. In terms of assembly, contains catalytic and regulatory chains. Zn(2+) is required as a cofactor.

Functionally, involved in allosteric regulation of aspartate carbamoyltransferase. In Thermococcus onnurineus (strain NA1), this protein is Aspartate carbamoyltransferase regulatory chain.